Consider the following 1588-residue polypeptide: Autotransporter adhesin EhaG (1588 aa).

Positions 1 to 53 are cleaved as a signal peptide; it reads MNKIFKVIWNPATGNYTVTSETAKSRGKKSGRSKLLISALVAGGMLSSFGALA. Positions 54 to 1499 are surface exposed passenger domain; sequence NAGNDNGQGV…QETKQYTDQR (1446 aa). The segment at 1500–1588 is translocator domain; that stretch reads MVEMDNKLSK…SAALGAGIQW (89 aa). Beta stranded transmembrane passes span 1534–1544, 1548–1558, 1567–1573, and 1577–1588; these read GASMASIGGGT, ESAVALGVSMV, KLQGSTN, and EYSAALGAGIQW.

The protein belongs to the autotransporter-2 (AT-2) (TC 1.B.40) family. As to quaternary structure, homotrimer.

It is found in the cell surface. It localises to the cell outer membrane. Functionally, mediates aggregation, biofilm formation and adhesion to a range of extracellular matrix (ECM) proteins, such as fibronectin, fibrinogen, laminin and collagen types I, II, III, and V. Mediates adhesion to intestinal epithelial cells. The chain is Autotransporter adhesin EhaG from Escherichia coli O157:H7.